A 101-amino-acid chain; its full sequence is Small ribosomal subunit protein uS14A (101 aa).

The segment at 31–67 is disordered; sequence LRRPSSTEAERLAAQRELRRQPRDASPTRVRNRDQID. The span at 38 to 53 shows a compositional bias: basic and acidic residues; it reads EAERLAAQRELRRQPR.

It belongs to the universal ribosomal protein uS14 family. Part of the 30S ribosomal subunit. Contacts proteins S3 and S10.

Functionally, binds 16S rRNA, required for the assembly of 30S particles and may also be responsible for determining the conformation of the 16S rRNA at the A site. This chain is Small ribosomal subunit protein uS14A, found in Streptomyces coelicolor (strain ATCC BAA-471 / A3(2) / M145).